The sequence spans 278 residues: Tryptophan synthase alpha chain (278 aa).

Residues Glu49 and Asp60 each act as proton acceptor in the active site.

Belongs to the TrpA family. Tetramer of two alpha and two beta chains.

The enzyme catalyses (1S,2R)-1-C-(indol-3-yl)glycerol 3-phosphate + L-serine = D-glyceraldehyde 3-phosphate + L-tryptophan + H2O. It participates in amino-acid biosynthesis; L-tryptophan biosynthesis; L-tryptophan from chorismate: step 5/5. The alpha subunit is responsible for the aldol cleavage of indoleglycerol phosphate to indole and glyceraldehyde 3-phosphate. The polypeptide is Tryptophan synthase alpha chain (Corynebacterium diphtheriae (strain ATCC 700971 / NCTC 13129 / Biotype gravis)).